Consider the following 296-residue polypeptide: tRNA pseudouridine synthase B (296 aa).

Asp-38 (nucleophile) is an active-site residue.

It belongs to the pseudouridine synthase TruB family. Type 1 subfamily.

The enzyme catalyses uridine(55) in tRNA = pseudouridine(55) in tRNA. Its function is as follows. Responsible for synthesis of pseudouridine from uracil-55 in the psi GC loop of transfer RNAs. This chain is tRNA pseudouridine synthase B, found in Ehrlichia chaffeensis (strain ATCC CRL-10679 / Arkansas).